The primary structure comprises 698 residues: MNPIVKSFEYGQHTVTLETGVIARQADAAVLASMGDTTVLVTVVGKKVADLSRDFFPLTVNYQEKTYAAGKIPGGFFKREGRPSEDETLIARLIDRPIRPLFPNGFKNEVQVIITVVSVDPQIEPDIISMIGTSAALAISGIPFSGPLGAARVGYINGEYLLNPTVDQLATSSLNLVVAGTKAAVLMVESEAKALAEEIMLGAVTYGHDQQQVVVDAIAEFKAEAGKPTWDWTAPVQDQALVAKIKELAEAGMTDAYQIEVKQDRYVQVGVVKAAAKAALVAENPDVDTREVDNLLGSLEKNVVRSRIIAGKPRIDGREPDMIRALNVLAGVLPRTHGSSLFTRGETQALVTCTLGTERDAQKIDSIMGERTNRFMLHYNFPPYSVGETGMVGSPKRREIGHGKLAWRGMNAVMPTAEEFPYSIRVVSEITESNGSSSMASVCGTSLALMDAGVPIKTSVAGIAMGLVKEGDDFVVLSDILGDEDHLGDMDFKVAGTRDGITALQMDIKIEGITKEIMDIALQQAYGARVHILNVMDQAIGTHRGDISAHAPRITTIKINPEKIRDVIGKGGAVIRALTEETGTTIELDDDGTVKIASSNGEATKEAIRRIEEITAEVEVGRVYNGKVIRIVDFGAFINILPGKDGLVHISQISDERVANVSDHLEMNQDVKVKVMEVDRQGRVRLSIKEAQEKVAAE.

Residues D485 and D491 each coordinate Mg(2+). The KH domain maps to 552–611 (PRITTIKINPEKIRDVIGKGGAVIRALTEETGTTIELDDDGTVKIASSNGEATKEAIRRI). The region spanning 621–689 (GRVYNGKVIR…RQGRVRLSIK (69 aa)) is the S1 motif domain.

Belongs to the polyribonucleotide nucleotidyltransferase family. Component of the RNA degradosome, which is a multiprotein complex involved in RNA processing and mRNA degradation. Mg(2+) is required as a cofactor.

It localises to the cytoplasm. The enzyme catalyses RNA(n+1) + phosphate = RNA(n) + a ribonucleoside 5'-diphosphate. In terms of biological role, involved in mRNA degradation. Catalyzes the phosphorolysis of single-stranded polyribonucleotides processively in the 3'- to 5'-direction. In Shewanella denitrificans (strain OS217 / ATCC BAA-1090 / DSM 15013), this protein is Polyribonucleotide nucleotidyltransferase.